A 135-amino-acid chain; its full sequence is ATP synthase epsilon chain (135 aa).

The protein belongs to the ATPase epsilon chain family. F-type ATPases have 2 components, CF(1) - the catalytic core - and CF(0) - the membrane proton channel. CF(1) has five subunits: alpha(3), beta(3), gamma(1), delta(1), epsilon(1). CF(0) has three main subunits: a, b and c.

Its subcellular location is the cell inner membrane. Its function is as follows. Produces ATP from ADP in the presence of a proton gradient across the membrane. In Rhodopseudomonas palustris (strain BisB18), this protein is ATP synthase epsilon chain.